The chain runs to 60 residues: Large ribosomal subunit protein uL29 (60 aa).

The protein belongs to the universal ribosomal protein uL29 family.

This is Large ribosomal subunit protein uL29 from Fusobacterium nucleatum subsp. nucleatum (strain ATCC 25586 / DSM 15643 / BCRC 10681 / CIP 101130 / JCM 8532 / KCTC 2640 / LMG 13131 / VPI 4355).